The following is a 435-amino-acid chain: Nuclear distribution protein nudF 2 (435 aa).

The 33-residue stretch at 9 to 41 (QAEELHKSIIAYLSANGLPETTAILRKELGVTE) folds into the LisH domain. 8 WD repeats span residues 86–125 (SHRD…LEVT), 128–171 (GHTR…KNIR), 175–214 (GHDH…CVKT), 217–256 (GHTG…ENKL), 280–320 (APLA…LMTL), 322–361 (GHDN…KCVK), 366–396 (THGG…VRQI), and 397–434 (PDVA…QIFA).

The protein belongs to the WD repeat LIS1/nudF family. As to quaternary structure, self-associates. Interacts with nudE and dynein.

It is found in the cytoplasm. It localises to the cytoskeleton. The protein resides in the spindle pole. In terms of biological role, positively regulates the activity of the minus-end directed microtubule motor protein dynein. May enhance dynein-mediated microtubule sliding by targeting dynein to the microtubule plus end. Required for nuclear migration during vegetative growth as well as development. Required for retrograde early endosome (EE) transport from the hyphal tip. Required for localization of dynein to the mitotic spindle poles. Recruits additional proteins to the dynein complex at SPBs. This Aspergillus clavatus (strain ATCC 1007 / CBS 513.65 / DSM 816 / NCTC 3887 / NRRL 1 / QM 1276 / 107) protein is Nuclear distribution protein nudF 2.